We begin with the raw amino-acid sequence, 622 residues long: Low affinity potassium transport system protein Kup (622 aa).

12 helical membrane passes run 9 to 29, 46 to 66, 101 to 121, 137 to 157, 165 to 185, 213 to 233, 247 to 267, 276 to 296, 337 to 357, 363 to 383, 395 to 415, and 416 to 436; these read LSAV…TSPL, PDVV…VVSV, ILVV…VITP, PALD…LFVI, VGKL…LLGL, VSFF…ALYA, WFTV…ALLL, PFFL…ATLA, IYIP…IIGF, LAAA…ILFC, FLVV…FSAN, and VLKL…MFII.

Belongs to the HAK/KUP transporter (TC 2.A.72) family.

It localises to the cell inner membrane. It carries out the reaction K(+)(in) + H(+)(in) = K(+)(out) + H(+)(out). In terms of biological role, responsible for the low-affinity transport of potassium into the cell. Likely operates as a K(+):H(+) symporter. This chain is Low affinity potassium transport system protein Kup, found in Yersinia pestis bv. Antiqua (strain Antiqua).